Here is a 288-residue protein sequence, read N- to C-terminus: Aquaporin PIP1-5 (288 aa).

The tract at residues methionine 1–proline 36 is disordered. Helical transmembrane passes span isoleucine 57 to valine 77 and isoleucine 92 to histidine 114. The NPA 1 signature appears at asparagine 116 to alanine 118. 3 consecutive transmembrane segments (helical) span residues leucine 135–phenylalanine 155, glycine 177–alanine 197, and isoleucine 211–isoleucine 231. The NPA 2 signature appears at asparagine 237–alanine 239. The helical transmembrane segment at isoleucine 259–isoleucine 279 threads the bilayer.

This sequence belongs to the MIP/aquaporin (TC 1.A.8) family. PIP (TC 1.A.8.11) subfamily. In terms of tissue distribution, highly expressed in roots and at lower levels in anthers and silks.

It localises to the cell membrane. Water channel required to facilitate the transport of water across cell membrane. This is Aquaporin PIP1-5 (PIP1-5) from Zea mays (Maize).